The following is a 227-amino-acid chain: LysM and putative peptidoglycan-binding domain-containing protein 1 (227 aa).

The span at 1-11 (MASPSRQPPPG) shows a compositional bias: pro residues. The interval 1 to 22 (MASPSRQPPPGGSGLLQGSRAR) is disordered. Ser23 and Ser33 each carry phosphoserine. In terms of domain architecture, LysM spans 40–84 (LEHQLEPGDTLAGLALKYGVTMEQIKRANRLYTNDSIFLKKTLYI). Residues 97-150 (LDSEEEKDGEEKVHPSNSEVWPHSTERKKQETGAGRANGEVLPTPGQETPTPIH) are disordered. Residues Ser99, Ser166, Ser194, and Ser212 each carry the phosphoserine modification.

The protein is LysM and putative peptidoglycan-binding domain-containing protein 1 (LYSMD1) of Homo sapiens (Human).